A 211-amino-acid chain; its full sequence is Phosphoheptose isomerase (211 aa).

In terms of domain architecture, SIS spans 50-211 (IAGTFEDGGK…VERMLGYCRL (162 aa)). 65–67 (NGG) contacts substrate. Positions 74 and 78 each coordinate Zn(2+). Substrate contacts are provided by residues Glu-78, 109 to 110 (ND), 135 to 137 (STS), Ser-140, and Gln-188. The Zn(2+) site is built by Gln-188 and His-196.

This sequence belongs to the SIS family. GmhA subfamily. Zn(2+) serves as cofactor.

It is found in the cytoplasm. It carries out the reaction 2 D-sedoheptulose 7-phosphate = D-glycero-alpha-D-manno-heptose 7-phosphate + D-glycero-beta-D-manno-heptose 7-phosphate. It functions in the pathway carbohydrate biosynthesis; D-glycero-D-manno-heptose 7-phosphate biosynthesis; D-glycero-alpha-D-manno-heptose 7-phosphate and D-glycero-beta-D-manno-heptose 7-phosphate from sedoheptulose 7-phosphate: step 1/1. Its function is as follows. Catalyzes the isomerization of sedoheptulose 7-phosphate in D-glycero-D-manno-heptose 7-phosphate. This Pelodictyon phaeoclathratiforme (strain DSM 5477 / BU-1) protein is Phosphoheptose isomerase.